The primary structure comprises 394 residues: Glycerol-1-phosphate dehydrogenase [NAD(P)+] (394 aa).

Residues Asp-54, 116 to 120 (GTIHD), and 138 to 141 (TAPS) each bind NAD(+). Asp-143 is a binding site for substrate. Ser-147 provides a ligand contact to NAD(+). A substrate-binding site is contributed by Asp-190. The Ni(2+) site is built by Asp-190 and His-270. His-274 serves as a coordination point for substrate. His-290 is a binding site for Ni(2+).

The protein belongs to the glycerol-1-phosphate dehydrogenase family. As to quaternary structure, homodimer. The cofactor is Ni(2+).

It localises to the cytoplasm. The catalysed reaction is sn-glycerol 1-phosphate + NAD(+) = dihydroxyacetone phosphate + NADH + H(+). The enzyme catalyses sn-glycerol 1-phosphate + NADP(+) = dihydroxyacetone phosphate + NADPH + H(+). Functionally, catalyzes the NAD(P)H-dependent reduction of dihydroxyacetonephosphate (DHAP or glycerone phosphate) to glycerol 1-phosphate (G1P). The G1P thus generated is probably used for the synthesis of phosphoglycerolipids in Gram-positive bacterial species. Prefers NADH over NADPH as coenzyme. Is also able to catalyze the reverse reaction, i.e. the NAD(+)-dependent oxidation of G1P but not of G3P. Does not possess glycerol dehydrogenase activity. In Bacillus subtilis (strain 168), this protein is Glycerol-1-phosphate dehydrogenase [NAD(P)+] (egsA).